A 133-amino-acid chain; its full sequence is Putative actin-depolymerizing factor 11 (133 aa).

Residues 1-133 enclose the ADF-H domain; it reads MVLHDDCKLT…SLDAIRRRIN (133 aa).

The protein belongs to the actin-binding proteins ADF family.

It is found in the cytoplasm. The protein resides in the cytoskeleton. Functionally, actin-depolymerizing protein. Severs actin filaments (F-actin) and binds to actin monomers. The polypeptide is Putative actin-depolymerizing factor 11 (ADF11) (Arabidopsis thaliana (Mouse-ear cress)).